A 671-amino-acid polypeptide reads, in one-letter code: DNA ligase (671 aa).

NAD(+) is bound by residues 32-36 (DAEYD), 81-82 (SL), and Glu-113. The active-site N6-AMP-lysine intermediate is Lys-115. Positions 136, 173, 290, and 314 each coordinate NAD(+). Zn(2+) is bound by residues Cys-408, Cys-411, Cys-426, and Cys-432. In terms of domain architecture, BRCT spans 593 to 671 (EIDSPFAGKT…EAEMLRLLGS (79 aa)).

This sequence belongs to the NAD-dependent DNA ligase family. LigA subfamily. Mg(2+) serves as cofactor. Requires Mn(2+) as cofactor.

It catalyses the reaction NAD(+) + (deoxyribonucleotide)n-3'-hydroxyl + 5'-phospho-(deoxyribonucleotide)m = (deoxyribonucleotide)n+m + AMP + beta-nicotinamide D-nucleotide.. Functionally, DNA ligase that catalyzes the formation of phosphodiester linkages between 5'-phosphoryl and 3'-hydroxyl groups in double-stranded DNA using NAD as a coenzyme and as the energy source for the reaction. It is essential for DNA replication and repair of damaged DNA. In Escherichia coli (strain ATCC 8739 / DSM 1576 / NBRC 3972 / NCIMB 8545 / WDCM 00012 / Crooks), this protein is DNA ligase.